The following is a 174-amino-acid chain: Ribosome maturation factor RimM (174 aa).

In terms of domain architecture, PRC barrel spans 99–172 (ADEFFYHDVI…RLVIRPIAGL (74 aa)).

The protein belongs to the RimM family. As to quaternary structure, binds ribosomal protein uS19.

The protein resides in the cytoplasm. In terms of biological role, an accessory protein needed during the final step in the assembly of 30S ribosomal subunit, possibly for assembly of the head region. Essential for efficient processing of 16S rRNA. May be needed both before and after RbfA during the maturation of 16S rRNA. It has affinity for free ribosomal 30S subunits but not for 70S ribosomes. The protein is Ribosome maturation factor RimM of Chloroflexus aurantiacus (strain ATCC 29366 / DSM 635 / J-10-fl).